Consider the following 212-residue polypeptide: Translation initiation factor IF-3 (212 aa).

Belongs to the IF-3 family. In terms of assembly, monomer.

Its subcellular location is the cytoplasm. In terms of biological role, IF-3 binds to the 30S ribosomal subunit and shifts the equilibrium between 70S ribosomes and their 50S and 30S subunits in favor of the free subunits, thus enhancing the availability of 30S subunits on which protein synthesis initiation begins. In Synechococcus sp. (strain CC9311), this protein is Translation initiation factor IF-3.